The chain runs to 313 residues: MPIQLECLSHTPLHGYVDPAPEVVAEVERVQAAARDRVRAFDPELVVVFAPDHFNGFFYDVMPPFCIGAAATAIGDFKSLAGKLPVPADLALSLAESVMAADIDVALSHRMQVDHGCADALAALTGSLHRYPVIPVFINSVAPPMATLRRARLLGDAVGRFLSRAGKRVLVVGSGGISHEPPVPELAGASEEVAERLIAGRNPSPESAARQARTVAAAKSFVAGDSHLHPLNPEWDRAFLSLLASGELTAVDGMTNDAITRDGGKSAHEIRTWVAAFGALAAYGPYRASLDFYRAIPEWIAGFATMHAEPAAV.

The Proton donor role is filled by H115. Catalysis depends on H179, which acts as the Proton acceptor.

The protein belongs to the LigB/MhpB extradiol dioxygenase family. In terms of assembly, homotetramer. Fe(2+) serves as cofactor.

It carries out the reaction 3-(2,3-dihydroxyphenyl)propanoate + O2 = (2Z,4E)-2-hydroxy-6-oxonona-2,4-dienedioate + H(+). The enzyme catalyses (2E)-3-(2,3-dihydroxyphenyl)prop-2-enoate + O2 = (2Z,4E,7E)-2-hydroxy-6-oxonona-2,4,7-trienedioate + H(+). The protein operates within aromatic compound metabolism; 3-phenylpropanoate degradation. Catalyzes the non-heme iron(II)-dependent oxidative cleavage of 2,3-dihydroxyphenylpropionic acid and 2,3-dihydroxicinnamic acid into 2-hydroxy-6-ketononadienedioate and 2-hydroxy-6-ketononatrienedioate, respectively. Also catalyzes the cleavage of catechol. This is 2,3-dihydroxyphenylpropionate/2,3-dihydroxicinnamic acid 1,2-dioxygenase (mhpB) from Cupriavidus necator (Alcaligenes eutrophus).